Here is a 268-residue protein sequence, read N- to C-terminus: Nickel import ATP-binding protein NikE (268 aa).

One can recognise an ABC transporter domain in the interval 4-252; it reads LNVSGLSHHY…SSDAGRVLQN (249 aa). An ATP-binding site is contributed by 45–52; that stretch reads GRSGCGKS.

This sequence belongs to the ABC transporter superfamily. Nickel importer (TC 3.A.1.5.3) family. As to quaternary structure, the complex is composed of two ATP-binding proteins (NikD and NikE), two transmembrane proteins (NikB and NikC) and a solute-binding protein (NikA).

Its subcellular location is the cell inner membrane. It carries out the reaction Ni(2+)(out) + ATP + H2O = Ni(2+)(in) + ADP + phosphate + H(+). Part of the ABC transporter complex NikABCDE involved in nickel import. Responsible for energy coupling to the transport system. This Shigella boydii serotype 4 (strain Sb227) protein is Nickel import ATP-binding protein NikE.